The following is a 105-amino-acid chain: Large ribosomal subunit protein eL30 (105 aa).

Glycyl lysine isopeptide (Lys-Gly) (interchain with G-Cter in ubiquitin) cross-links involve residues Lys-22, Lys-53, and Lys-83.

It belongs to the eukaryotic ribosomal protein eL30 family. Component of the large ribosomal subunit (LSU). Mature yeast ribosomes consist of a small (40S) and a large (60S) subunit. The 40S small subunit contains 1 molecule of ribosomal RNA (18S rRNA) and 33 different proteins (encoded by 57 genes). The large 60S subunit contains 3 rRNA molecules (25S, 5.8S and 5S rRNA) and 46 different proteins (encoded by 81 genes).

The protein localises to the cytoplasm. Functionally, component of the ribosome, a large ribonucleoprotein complex responsible for the synthesis of proteins in the cell. The small ribosomal subunit (SSU) binds messenger RNAs (mRNAs) and translates the encoded message by selecting cognate aminoacyl-transfer RNA (tRNA) molecules. The large subunit (LSU) contains the ribosomal catalytic site termed the peptidyl transferase center (PTC), which catalyzes the formation of peptide bonds, thereby polymerizing the amino acids delivered by tRNAs into a polypeptide chain. The nascent polypeptides leave the ribosome through a tunnel in the LSU and interact with protein factors that function in enzymatic processing, targeting, and the membrane insertion of nascent chains at the exit of the ribosomal tunnel. This Saccharomyces cerevisiae (strain ATCC 204508 / S288c) (Baker's yeast) protein is Large ribosomal subunit protein eL30.